A 430-amino-acid polypeptide reads, in one-letter code: Tyrosine--tRNA ligase (430 aa).

Residue Tyr32 coordinates L-tyrosine. The 'HIGH' region motif lies at 37–46 (PTADSLHIGH). The L-tyrosine site is built by Tyr172 and Gln176. The 'KMSKS' region signature appears at 232–236 (KFGKT). ATP is bound at residue Lys235. Positions 362 to 429 (IKAVDLCTEK…GKKNYYLLIA (68 aa)) constitute an S4 RNA-binding domain.

Belongs to the class-I aminoacyl-tRNA synthetase family. TyrS type 1 subfamily. In terms of assembly, homodimer.

It is found in the cytoplasm. The enzyme catalyses tRNA(Tyr) + L-tyrosine + ATP = L-tyrosyl-tRNA(Tyr) + AMP + diphosphate + H(+). In terms of biological role, catalyzes the attachment of tyrosine to tRNA(Tyr) in a two-step reaction: tyrosine is first activated by ATP to form Tyr-AMP and then transferred to the acceptor end of tRNA(Tyr). This Parabacteroides distasonis (strain ATCC 8503 / DSM 20701 / CIP 104284 / JCM 5825 / NCTC 11152) protein is Tyrosine--tRNA ligase.